We begin with the raw amino-acid sequence, 370 residues long: UDP-N-acetylglucosamine--N-acetylmuramyl-(pentapeptide) pyrophosphoryl-undecaprenol N-acetylglucosamine transferase (370 aa).

Residues 10 to 12 (TGG), Asn124, Ser196, Ile253, and Gln298 contribute to the UDP-N-acetyl-alpha-D-glucosamine site.

This sequence belongs to the glycosyltransferase 28 family. MurG subfamily.

It is found in the cell membrane. It catalyses the reaction Mur2Ac(oyl-L-Ala-gamma-D-Glu-L-Lys-D-Ala-D-Ala)-di-trans,octa-cis-undecaprenyl diphosphate + UDP-N-acetyl-alpha-D-glucosamine = beta-D-GlcNAc-(1-&gt;4)-Mur2Ac(oyl-L-Ala-gamma-D-Glu-L-Lys-D-Ala-D-Ala)-di-trans,octa-cis-undecaprenyl diphosphate + UDP + H(+). Its pathway is cell wall biogenesis; peptidoglycan biosynthesis. Cell wall formation. Catalyzes the transfer of a GlcNAc subunit on undecaprenyl-pyrophosphoryl-MurNAc-pentapeptide (lipid intermediate I) to form undecaprenyl-pyrophosphoryl-MurNAc-(pentapeptide)GlcNAc (lipid intermediate II). In Limosilactobacillus reuteri subsp. reuteri (strain JCM 1112) (Lactobacillus reuteri), this protein is UDP-N-acetylglucosamine--N-acetylmuramyl-(pentapeptide) pyrophosphoryl-undecaprenol N-acetylglucosamine transferase.